A 155-amino-acid chain; its full sequence is Ribosomal RNA large subunit methyltransferase H (155 aa).

Residues Leu-72, Gly-103, and 122–127 contribute to the S-adenosyl-L-methionine site; that span reads LSDLTL.

It belongs to the RNA methyltransferase RlmH family. In terms of assembly, homodimer.

It localises to the cytoplasm. It catalyses the reaction pseudouridine(1915) in 23S rRNA + S-adenosyl-L-methionine = N(3)-methylpseudouridine(1915) in 23S rRNA + S-adenosyl-L-homocysteine + H(+). In terms of biological role, specifically methylates the pseudouridine at position 1915 (m3Psi1915) in 23S rRNA. The protein is Ribosomal RNA large subunit methyltransferase H of Variovorax paradoxus (strain S110).